The chain runs to 338 residues: Anthranilate phosphoribosyltransferase (338 aa).

5-phospho-alpha-D-ribose 1-diphosphate contacts are provided by residues G81, 84–85 (GD), S89, 91–94 (NVST), 109–117 (KHGNRALSS), and A121. G81 is an anthranilate binding site. S93 contacts Mg(2+). N112 is an anthranilate binding site. An anthranilate-binding site is contributed by R167. Positions 226 and 227 each coordinate Mg(2+).

Belongs to the anthranilate phosphoribosyltransferase family. In terms of assembly, homodimer. Mg(2+) is required as a cofactor.

It catalyses the reaction N-(5-phospho-beta-D-ribosyl)anthranilate + diphosphate = 5-phospho-alpha-D-ribose 1-diphosphate + anthranilate. It participates in amino-acid biosynthesis; L-tryptophan biosynthesis; L-tryptophan from chorismate: step 2/5. In terms of biological role, catalyzes the transfer of the phosphoribosyl group of 5-phosphorylribose-1-pyrophosphate (PRPP) to anthranilate to yield N-(5'-phosphoribosyl)-anthranilate (PRA). The polypeptide is Anthranilate phosphoribosyltransferase (Rhodopseudomonas palustris (strain TIE-1)).